We begin with the raw amino-acid sequence, 534 residues long: Cytochrome P450 monooxygenase vrtK (534 aa).

Position 448 (cysteine 448) interacts with heme.

It belongs to the cytochrome P450 family. It depends on heme as a cofactor.

Its pathway is secondary metabolite biosynthesis; terpenoid biosynthesis. Functionally, cytochrome P450 monooxygenase; part of the gene cluster that mediates the biosynthesis of viridicatumtoxin, a tetracycline-like fungal meroterpenoid with a unique, fused spirobicyclic ring system. The first step of the pathway is the production of the malonamoyl-CoA starter unit for the polyketide synthase vrtA. The aldolase vrtJ may be involved in the synthesis of the malonamate substrate for malonamoyl-CoA synthetase vrtB. The polyketide synthase vrtA then may utilize the malonamoyl-CoA starter unit, followed by sequential condensation of eight malonyl-CoA units to form the polyketide backbone. The cyclization of the last ring could be mediated by the lactamase-like protein vrtG. The proposed post-PKS tailoring steps are a hydroxylation at C5 catalyzed the cytochrome P450 monooxygenase vrtE, a hydroxylation at C12a catalyzed by VrtH and/or VrtI, and an O-methylation by the O-methyltransferase vrtF. VrtC is then proposed to catalyze the transfer of a geranyl group synthesized by vrtD to the aromatic C ring of the tetracyclic polyketide intermediate of viridicatumtoxin to yield previridicatumtoxin. Finally, the cytochrome P450 monooxygenase vrtK catalyzes the spirocyclization of the geranyl moiety of previridicatumtoxin to afford viridicatumtoxin. This chain is Cytochrome P450 monooxygenase vrtK, found in Penicillium aethiopicum.